A 1038-amino-acid chain; its full sequence is Kinesin-like protein KIN-5B (1038 aa).

Residues 1 to 63 (MAQTPNPSRR…GGGGGGGSEM (63 aa)) form a disordered region. Over residues 24-34 (RPERRQLELRW) the composition is skewed to basic and acidic residues. Positions 49 to 61 (GLTGGGGGGGGGS) are enriched in gly residues. A Kinesin motor domain is found at 69 to 410 (NVQVVLRCRP…LDYAYRAKSI (342 aa)). Position 154–161 (154–161 (GQTGTGKT)) interacts with ATP. Residues 453–502 (QERFALEEAEKKTMRDKIEYLETQNKELKMNIESCKKEYLDLEEAHSRAN) adopt a coiled-coil conformation. Residues 1013–1038 (DKGKRYVDQGTRTPRSPLMPVNHYNK) form a disordered region.

It belongs to the TRAFAC class myosin-kinesin ATPase superfamily. Kinesin family. KIN-5/BimC subfamily.

The protein resides in the cytoplasm. It localises to the cytoskeleton. The protein localises to the spindle. Functionally, responsible for microtubule translocation. May be important for the organization of phragmoplast-specific arrays of microtubules. Plays an essential role in stabilizing the mitotic spindle. Required during mitotic cytokinesis. This chain is Kinesin-like protein KIN-5B, found in Oryza sativa subsp. japonica (Rice).